Reading from the N-terminus, the 186-residue chain is Peptidyl-tRNA hydrolase (186 aa).

Position 14 (tyrosine 14) interacts with tRNA. Histidine 19 serves as the catalytic Proton acceptor. Tyrosine 64, asparagine 66, and asparagine 112 together coordinate tRNA.

This sequence belongs to the PTH family. In terms of assembly, monomer.

The protein resides in the cytoplasm. It catalyses the reaction an N-acyl-L-alpha-aminoacyl-tRNA + H2O = an N-acyl-L-amino acid + a tRNA + H(+). Its function is as follows. Hydrolyzes ribosome-free peptidyl-tRNAs (with 1 or more amino acids incorporated), which drop off the ribosome during protein synthesis, or as a result of ribosome stalling. In terms of biological role, catalyzes the release of premature peptidyl moieties from peptidyl-tRNA molecules trapped in stalled 50S ribosomal subunits, and thus maintains levels of free tRNAs and 50S ribosomes. The polypeptide is Peptidyl-tRNA hydrolase (Mesoplasma florum (strain ATCC 33453 / NBRC 100688 / NCTC 11704 / L1) (Acholeplasma florum)).